The sequence spans 308 residues: Acetaldehyde dehydrogenase 2 (308 aa).

12–15 (SGNI) serves as a coordination point for NAD(+). C127 serves as the catalytic Acyl-thioester intermediate. NAD(+)-binding positions include 162–170 (SAGPGTRAN) and N281.

This sequence belongs to the acetaldehyde dehydrogenase family.

The enzyme catalyses acetaldehyde + NAD(+) + CoA = acetyl-CoA + NADH + H(+). This is Acetaldehyde dehydrogenase 2 from Mycobacterium marinum (strain ATCC BAA-535 / M).